A 314-amino-acid polypeptide reads, in one-letter code: Deoxymugineic acid synthase 1 (314 aa).

A disordered region spans residues 1–21 (MGAGDRTVAGMPRIGMGTAVQ). Asp-44 contributes to the NADP(+) binding site. Tyr-49 serves as the catalytic Proton donor. His-112 serves as a coordination point for substrate. NADP(+) is bound by residues 158–159 (AN), Gln-180, 258–266 (FDEARMREN), and 273–281 (ELTEEERRR).

It belongs to the aldo/keto reductase family.

The catalysed reaction is 2'-deoxymugineate + NAD(+) = 3''-deamino-3''-oxonicotianamine + NADH + H(+). It catalyses the reaction 2'-deoxymugineate + NADP(+) = 3''-deamino-3''-oxonicotianamine + NADPH + H(+). Its pathway is siderophore biosynthesis. In terms of biological role, catalyzes the reduction of a 3''-keto intermediate during the biosynthesis of 2'-deoxymugineic acid (DMA) from L-Met. Involved in the formation of phytosiderophores (MAs) belonging to the mugineic acid family and required to acquire iron. This chain is Deoxymugineic acid synthase 1, found in Hordeum vulgare (Barley).